The chain runs to 385 residues: Succinyl-diaminopimelate desuccinylase (385 aa).

Histidine 78 is a binding site for Zn(2+). The active site involves aspartate 80. Residue aspartate 110 participates in Zn(2+) binding. Glutamate 144 functions as the Proton acceptor in the catalytic mechanism. Zn(2+)-binding residues include glutamate 145, glutamate 173, and histidine 358.

This sequence belongs to the peptidase M20A family. DapE subfamily. As to quaternary structure, homodimer. Zn(2+) is required as a cofactor. It depends on Co(2+) as a cofactor.

It carries out the reaction N-succinyl-(2S,6S)-2,6-diaminopimelate + H2O = (2S,6S)-2,6-diaminopimelate + succinate. It participates in amino-acid biosynthesis; L-lysine biosynthesis via DAP pathway; LL-2,6-diaminopimelate from (S)-tetrahydrodipicolinate (succinylase route): step 3/3. Its function is as follows. Catalyzes the hydrolysis of N-succinyl-L,L-diaminopimelic acid (SDAP), forming succinate and LL-2,6-diaminopimelate (DAP), an intermediate involved in the bacterial biosynthesis of lysine and meso-diaminopimelic acid, an essential component of bacterial cell walls. The sequence is that of Succinyl-diaminopimelate desuccinylase from Gluconacetobacter diazotrophicus (strain ATCC 49037 / DSM 5601 / CCUG 37298 / CIP 103539 / LMG 7603 / PAl5).